Reading from the N-terminus, the 358-residue chain is DNA primase large subunit PriL (358 aa).

Residues Cys-234, Cys-306, Cys-315, and Cys-322 each contribute to the [4Fe-4S] cluster site. Residues 335 to 358 are disordered; that stretch reads KLDDTDEEELVDWREDEGEEEADA. Acidic residues predominate over residues 338–358; that stretch reads DTDEEELVDWREDEGEEEADA.

The protein belongs to the eukaryotic-type primase large subunit family. As to quaternary structure, heterodimer of a small subunit (PriS) and a large subunit (PriL). Requires [4Fe-4S] cluster as cofactor.

In terms of biological role, regulatory subunit of DNA primase, an RNA polymerase that catalyzes the synthesis of short RNA molecules used as primers for DNA polymerase during DNA replication. Stabilizes and modulates the activity of the small subunit, increasing the rate of DNA synthesis, and conferring RNA synthesis capability. The DNA polymerase activity may enable DNA primase to also catalyze primer extension after primer synthesis. May also play a role in DNA repair. The polypeptide is DNA primase large subunit PriL (Haloarcula marismortui (strain ATCC 43049 / DSM 3752 / JCM 8966 / VKM B-1809) (Halobacterium marismortui)).